The sequence spans 154 residues: 17 kDa surface antigen (154 aa).

Positions 1-19 (MKLLSKIMIIALAASTLQA) are cleaved as a signal peptide. A lipid anchor (N-palmitoyl cysteine) is attached at C20. Residue C20 is the site of S-diacylglycerol cysteine attachment.

This sequence belongs to the rickettsiale 17 kDa surface antigen family.

It localises to the cell outer membrane. The polypeptide is 17 kDa surface antigen (omp) (Rickettsia amblyommatis (Rickettsia amblyommii)).